The following is a 300-amino-acid chain: Bifunctional protein FolD (300 aa).

Residues 168-170, S193, and I234 each bind NADP(+); that span reads GRS.

Belongs to the tetrahydrofolate dehydrogenase/cyclohydrolase family. Homodimer.

The catalysed reaction is (6R)-5,10-methylene-5,6,7,8-tetrahydrofolate + NADP(+) = (6R)-5,10-methenyltetrahydrofolate + NADPH. It catalyses the reaction (6R)-5,10-methenyltetrahydrofolate + H2O = (6R)-10-formyltetrahydrofolate + H(+). Its pathway is one-carbon metabolism; tetrahydrofolate interconversion. In terms of biological role, catalyzes the oxidation of 5,10-methylenetetrahydrofolate to 5,10-methenyltetrahydrofolate and then the hydrolysis of 5,10-methenyltetrahydrofolate to 10-formyltetrahydrofolate. The protein is Bifunctional protein FolD of Ehrlichia ruminantium (strain Welgevonden).